The chain runs to 276 residues: Ribosomal RNA small subunit methyltransferase I (276 aa).

Belongs to the methyltransferase superfamily. RsmI family.

It is found in the cytoplasm. The enzyme catalyses cytidine(1402) in 16S rRNA + S-adenosyl-L-methionine = 2'-O-methylcytidine(1402) in 16S rRNA + S-adenosyl-L-homocysteine + H(+). Functionally, catalyzes the 2'-O-methylation of the ribose of cytidine 1402 (C1402) in 16S rRNA. This is Ribosomal RNA small subunit methyltransferase I from Mycoplasma pneumoniae (strain ATCC 29342 / M129 / Subtype 1) (Mycoplasmoides pneumoniae).